We begin with the raw amino-acid sequence, 529 residues long: Bifunctional purine biosynthesis protein PurH (529 aa).

The MGS-like domain occupies Met1–Val148.

Belongs to the PurH family.

The enzyme catalyses (6R)-10-formyltetrahydrofolate + 5-amino-1-(5-phospho-beta-D-ribosyl)imidazole-4-carboxamide = 5-formamido-1-(5-phospho-D-ribosyl)imidazole-4-carboxamide + (6S)-5,6,7,8-tetrahydrofolate. It catalyses the reaction IMP + H2O = 5-formamido-1-(5-phospho-D-ribosyl)imidazole-4-carboxamide. It functions in the pathway purine metabolism; IMP biosynthesis via de novo pathway; 5-formamido-1-(5-phospho-D-ribosyl)imidazole-4-carboxamide from 5-amino-1-(5-phospho-D-ribosyl)imidazole-4-carboxamide (10-formyl THF route): step 1/1. Its pathway is purine metabolism; IMP biosynthesis via de novo pathway; IMP from 5-formamido-1-(5-phospho-D-ribosyl)imidazole-4-carboxamide: step 1/1. The sequence is that of Bifunctional purine biosynthesis protein PurH from Wigglesworthia glossinidia brevipalpis.